Consider the following 259-residue polypeptide: ATP synthase subunit a (259 aa).

The propeptide at Met-1–Asn-7 is removed in mature form. A run of 5 helical transmembrane segments spans residues Phe-36 to Gly-56, Tyr-95 to Val-115, Leu-125 to Phe-145, Leu-164 to Lys-206, and Ile-211 to Lys-253.

F-type ATP synthases have 2 components, the catalytic core F(1) and the membrane-embedded component F(0), linked together by a central stalk and a peripheral stalk. The central stalk, also called rotor shaft, is often seen as part of F(1). The peripheral stalk is seen as part of F(0). F(0) contains the membrane channel next to the rotor. F-type ATP synthases form dimers but each monomer functions independently in ATP generation. The dimer consists of 18 different polypeptides: ATP1 (subunit alpha, part of F(1), 3 molecules per monomer), ATP2 (subunit beta, part of F(1), 3 molecules per monomer), ATP3 (subunit gamma, part of the central stalk), ATP4 (subunit b, part of the peripheral stalk), ATP5/OSCP (subunit 5/OSCP, part of the peripheral stalk), ATP6 (subunit a, part of the peripheral stalk), ATP7 (subunit d, part of the peripheral stalk), ATP8 (subunit 8, part of the peripheral stalk), OLI1 (subunit c, part of the rotor, 10 molecules per monomer), ATP14 (subunit h, part of the peripheral stalk), ATP15 (subunit epsilon, part of the central stalk), ATP16 (subunit delta, part of the central stalk), ATP17 (subunit f, part of the peripheral stalk), ATP18 (subunit i/j, part of the peripheral stalk). Dimer-specific subunits are ATP19 (subunit k, at interface between monomers), ATP20 (subunit g, at interface between monomers), TIM11 (subunit e, at interface between monomers). Also contains subunit L.

The protein resides in the mitochondrion inner membrane. Its function is as follows. Mitochondrial membrane ATP synthase (F(1)F(0) ATP synthase or Complex V) produces ATP from ADP in the presence of a proton gradient across the membrane which is generated by electron transport complexes of the respiratory chain. F-type ATP synthases consist of two structural domains, F(1) - containing the extramembraneous catalytic core, and F(0) - containing the membrane proton channel, linked together by a central stalk and a peripheral stalk. During catalysis, ATP synthesis in the catalytic domain of F(1) is coupled via a rotary mechanism of the central stalk subunits to proton translocation. Key component of the proton channel; it may play a direct role in the translocation of protons across the membrane. This chain is ATP synthase subunit a, found in Pichia angusta (Yeast).